Reading from the N-terminus, the 150-residue chain is Galectin-1 (150 aa).

Positions 9-141 (NQIKLQDDFK…FSSPVTVDIH (133 aa)) constitute a Galectin domain. 4 residues coordinate a carbohydrate: His51, Arg55, Asn64, and Glu75.

In terms of assembly, homotetramer. Oligomerization is required for carbohydrate binding. Most abundant in fruiting bodies. Very low levels of expression in asexual vegetative mycelia.

The protein localises to the secreted. Its subcellular location is the extracellular space. The protein resides in the extracellular matrix. It localises to the cell wall. It is found in the endomembrane system. Functionally, binds lactose. May play a role in fruiting body formation. In Coprinopsis cinerea (strain Okayama-7 / 130 / ATCC MYA-4618 / FGSC 9003) (Inky cap fungus), this protein is Galectin-1 (Cgl1).